A 562-amino-acid chain; its full sequence is Adenylate kinase isoenzyme 5 (562 aa).

Adenylate kinase stretches follow at residues 133-316 (KIIL…MAVD) and 377-559 (KIIF…TAID). 142–147 (GSGKGT) serves as a coordination point for ATP. An NMP 1 region spans residues 162-193 (SVGELLRKKIHSTSSNRKWSLIAKIITTGELA). AMP-binding positions include Arg-168, 191–193 (ELA), 219–222 (GFPR), and Gln-226. The interval 256-266 (KRAEQQGRPDD) is LID 1. ATP is bound at residue Arg-257. AMP contacts are provided by Arg-263 and Arg-274. 386-391 (GSGKGT) provides a ligand contact to ATP. Residues 406–435 (STGELLREELASESERSKLIRDIMERGDLV) are NMP 2. Residues Thr-407, Arg-412, 433–435 (DLV), 462–465 (GYPR), and Gln-469 contribute to the AMP site. The segment at 499–509 (QRSRSSLPVDD) is LID 2. Arg-500 is an ATP binding site. Arg-517 is a binding site for AMP. Gly-545 is an ATP binding site.

It belongs to the adenylate kinase family. In terms of assembly, monomer. Interacts with YWHAZ. As to expression, brain specific.

The protein resides in the cytoplasm. The catalysed reaction is AMP + ATP = 2 ADP. It carries out the reaction a 2'-deoxyribonucleoside 5'-diphosphate + ATP = a 2'-deoxyribonucleoside 5'-triphosphate + ADP. It catalyses the reaction a ribonucleoside 5'-diphosphate + ATP = a ribonucleoside 5'-triphosphate + ADP. Functionally, nucleoside monophosphate (NMP) kinase that catalyzes the reversible transfer of the terminal phosphate group between nucleoside triphosphates and monophosphates. Active on AMP and dAMP with ATP as a donor. When GTP is used as phosphate donor, the enzyme phosphorylates AMP, CMP, and to a small extent dCMP. Also displays broad nucleoside diphosphate kinase activity. In Homo sapiens (Human), this protein is Adenylate kinase isoenzyme 5 (AK5).